A 424-amino-acid polypeptide reads, in one-letter code: G1/S-specific cyclin-E (424 aa).

The interval 1–25 (MSRRSGRLQSRQDNQPLTECISDEN) is disordered. The segment covering 7–17 (RLQSRQDNQPL) has biased composition (polar residues). Residue T411 is modified to Phosphothreonine.

Belongs to the cyclin family. Cyclin E subfamily. In terms of assembly, interacts with a member of the CDK2/CDK protein kinases to form a serine/threonine kinase holoenzyme complex. The cyclin subunit imparts substrate specificity to the complex.

The protein resides in the nucleus. In terms of biological role, essential for the control of the cell cycle at the G1/S (start) transition. This is G1/S-specific cyclin-E (CYCE) from Hemicentrotus pulcherrimus (Sea urchin).